The primary structure comprises 288 residues: Fructokinase (288 aa).

ATP is bound at residue Thr131. His154, Cys169, His172, and Cys175 together coordinate Zn(2+). ATP is bound by residues Pro183 and 231–235 (GVMNQ).

Belongs to the ROK (NagC/XylR) family. It depends on Mg(2+) as a cofactor.

It catalyses the reaction D-fructose + ATP = D-fructose 6-phosphate + ADP + H(+). Inhibition by zinc ions. In Pediococcus pentosaceus, this protein is Fructokinase (scrK).